A 227-amino-acid chain; its full sequence is Lipoprotein-releasing system ATP-binding protein LolD (227 aa).

The region spanning 6–227 (LVLDDIQKSY…RLDEGVLVSA (222 aa)) is the ABC transporter domain. 43–50 (APSGAGKS) contributes to the ATP binding site.

It belongs to the ABC transporter superfamily. Lipoprotein translocase (TC 3.A.1.125) family. As to quaternary structure, the complex is composed of two ATP-binding proteins (LolD) and two transmembrane proteins (LolC and LolE).

It localises to the cell inner membrane. Its function is as follows. Part of the ABC transporter complex LolCDE involved in the translocation of mature outer membrane-directed lipoproteins, from the inner membrane to the periplasmic chaperone, LolA. Responsible for the formation of the LolA-lipoprotein complex in an ATP-dependent manner. This is Lipoprotein-releasing system ATP-binding protein LolD from Jannaschia sp. (strain CCS1).